Reading from the N-terminus, the 80-residue chain is Large ribosomal subunit protein bL31B (80 aa).

It belongs to the bacterial ribosomal protein bL31 family. Type B subfamily. In terms of assembly, part of the 50S ribosomal subunit.

This Exiguobacterium sp. (strain ATCC BAA-1283 / AT1b) protein is Large ribosomal subunit protein bL31B.